We begin with the raw amino-acid sequence, 330 residues long: tRNA U34 carboxymethyltransferase (330 aa).

Residues Lys91, Trp105, Lys110, Gly130, 152 to 154 (DPS), 181 to 182 (IE), Met196, Tyr200, and Arg315 contribute to the carboxy-S-adenosyl-L-methionine site.

The protein belongs to the class I-like SAM-binding methyltransferase superfamily. CmoB family. Homotetramer.

The catalysed reaction is carboxy-S-adenosyl-L-methionine + 5-hydroxyuridine(34) in tRNA = 5-carboxymethoxyuridine(34) in tRNA + S-adenosyl-L-homocysteine + H(+). Its function is as follows. Catalyzes carboxymethyl transfer from carboxy-S-adenosyl-L-methionine (Cx-SAM) to 5-hydroxyuridine (ho5U) to form 5-carboxymethoxyuridine (cmo5U) at position 34 in tRNAs. In Shewanella denitrificans (strain OS217 / ATCC BAA-1090 / DSM 15013), this protein is tRNA U34 carboxymethyltransferase.